A 481-amino-acid polypeptide reads, in one-letter code: RuvB-like helicase 2 (481 aa).

73–80 (GEPSTGKT) contacts ATP. The segment at 453–481 (EEVERDPAAGGGAKRRVEGGGGDAQPMEH) is disordered.

The protein belongs to the RuvB family. As to quaternary structure, forms homohexameric rings. May form a dodecamer with rept made of two stacked hexameric rings. Component of the chromatin remodeling Ino80 complex. Interacts with Myc and pont. As to expression, higher expression occurs in primordia of mesoderm, anterior and posterior midgut and cephalic furrow early in gastrulation, as well as in endoderm and mesoderm lineages during germ band extension. Later in development expression is only maintained in endoderm cells. Expressed in thoracic and abdominal segment neural precursors of all embryonic chordotonal organs.

It localises to the nucleus. It carries out the reaction ATP + H2O = ADP + phosphate + H(+). Functionally, acts as a transcriptional coactivator in Wg signaling caused by altered arm signaling. Pont and rept interfere antagonistically with nuclear arm signaling function, and are required to enhance or reduce arm activity, respectively. Also an essential cofactor for the normal function of Myc; required for cellular proliferation and growth. In terms of biological role, proposed core component of the chromatin remodeling Ino80 complex which is involved in transcriptional regulation, DNA replication and probably DNA repair. In Drosophila melanogaster (Fruit fly), this protein is RuvB-like helicase 2.